A 396-amino-acid polypeptide reads, in one-letter code: Cysteine protease ATG4A (396 aa).

Cys-77 serves as the catalytic Nucleophile. Residues Asp-276 and His-278 contribute to the active site. An LIR motif is present at residues 390 to 393 (FEIL).

Belongs to the peptidase C54 family. Interacts with ATG9A; the interaction is direct.

The protein resides in the cytoplasm. It carries out the reaction [protein]-C-terminal L-amino acid-glycyl-phosphatidylethanolamide + H2O = [protein]-C-terminal L-amino acid-glycine + a 1,2-diacyl-sn-glycero-3-phosphoethanolamine. Its activity is regulated as follows. Inhibited by N-ethylmaleimide. Redox-regulated during autophagy since reducing conditions activate ATG4A whereas an oxidizing environment such as the presence of H(2)O(2) inhibits its activity. Functionally, cysteine protease that plays a key role in autophagy by mediating both proteolytic activation and delipidation of ATG8 family proteins. The protease activity is required for proteolytic activation of ATG8 family proteins: cleaves the C-terminal amino acid of ATG8 proteins to reveal a C-terminal glycine. Exposure of the glycine at the C-terminus is essential for ATG8 proteins conjugation to phosphatidylethanolamine (PE) and insertion to membranes, which is necessary for autophagy. Preferred substrate is GABARAPL2 followed by MAP1LC3A and GABARAP. Protease activity is also required to counteract formation of high-molecular weight conjugates of ATG8 proteins (ATG8ylation): acts as a deubiquitinating-like enzyme that removes ATG8 conjugated to other proteins, such as ATG3. In addition to the protease activity, also mediates delipidation of ATG8 family proteins. Catalyzes delipidation of PE-conjugated forms of ATG8 proteins during macroautophagy. Compared to ATG4B, the major protein for proteolytic activation of ATG8 proteins, shows weaker ability to cleave the C-terminal amino acid of ATG8 proteins, while it displays stronger delipidation activity. Involved in phagophore growth during mitophagy independently of its protease activity and of ATG8 proteins: acts by regulating ATG9A trafficking to mitochondria and promoting phagophore-endoplasmic reticulum contacts during the lipid transfer phase of mitophagy. This is Cysteine protease ATG4A from Mus musculus (Mouse).